Here is a 285-residue protein sequence, read N- to C-terminus: Bifunctional protein FolD (285 aa).

NADP(+)-binding positions include 165 to 167 (GRS) and Ser-190.

This sequence belongs to the tetrahydrofolate dehydrogenase/cyclohydrolase family. As to quaternary structure, homodimer.

It carries out the reaction (6R)-5,10-methylene-5,6,7,8-tetrahydrofolate + NADP(+) = (6R)-5,10-methenyltetrahydrofolate + NADPH. The catalysed reaction is (6R)-5,10-methenyltetrahydrofolate + H2O = (6R)-10-formyltetrahydrofolate + H(+). It participates in one-carbon metabolism; tetrahydrofolate interconversion. Functionally, catalyzes the oxidation of 5,10-methylenetetrahydrofolate to 5,10-methenyltetrahydrofolate and then the hydrolysis of 5,10-methenyltetrahydrofolate to 10-formyltetrahydrofolate. The protein is Bifunctional protein FolD of Burkholderia cenocepacia (strain HI2424).